The following is a 138-amino-acid chain: Large ribosomal subunit protein uL16 (138 aa).

A compositionally biased stretch (basic residues) spans 1–16 (MLIPRRVKHRKQHHPG). The tract at residues 1 to 24 (MLIPRRVKHRKQHHPGRSGAATGG) is disordered.

Belongs to the universal ribosomal protein uL16 family. As to quaternary structure, part of the 50S ribosomal subunit.

In terms of biological role, binds 23S rRNA and is also seen to make contacts with the A and possibly P site tRNAs. The sequence is that of Large ribosomal subunit protein uL16 from Arthrobacter sp. (strain FB24).